Reading from the N-terminus, the 297-residue chain is Nucleotide-binding protein Bphy_0322 (297 aa).

Residue glycine 8–serine 15 coordinates ATP. Residue aspartate 57–serine 60 participates in GTP binding.

The protein belongs to the RapZ-like family.

Its function is as follows. Displays ATPase and GTPase activities. This chain is Nucleotide-binding protein Bphy_0322, found in Paraburkholderia phymatum (strain DSM 17167 / CIP 108236 / LMG 21445 / STM815) (Burkholderia phymatum).